Here is a 453-residue protein sequence, read N- to C-terminus: Bifunctional protein GlmU (453 aa).

Positions 1 to 225 (MNIVILAAGT…EWETLGVNSK (225 aa)) are pyrophosphorylase. UDP-N-acetyl-alpha-D-glucosamine contacts are provided by residues 6–9 (LAAG), Lys20, Gln71, 76–77 (GT), 98–100 (YGD), Gly135, Glu150, Asn165, and Asn223. Asp100 is a Mg(2+) binding site. Asn223 is a binding site for Mg(2+). The interval 226-246 (AQLAELERIHQRNVADALLVD) is linker. The tract at residues 247–453 (GVTLADPARV…GYVRPVKKKS (207 aa)) is N-acetyltransferase. Residues Arg329 and Lys347 each coordinate UDP-N-acetyl-alpha-D-glucosamine. His359 functions as the Proton acceptor in the catalytic mechanism. 2 residues coordinate UDP-N-acetyl-alpha-D-glucosamine: Tyr362 and Asn373. Acetyl-CoA-binding positions include Ala376, 382–383 (NY), Ser401, and Ala419.

This sequence in the N-terminal section; belongs to the N-acetylglucosamine-1-phosphate uridyltransferase family. The protein in the C-terminal section; belongs to the transferase hexapeptide repeat family. As to quaternary structure, homotrimer. Mg(2+) is required as a cofactor.

Its subcellular location is the cytoplasm. It carries out the reaction alpha-D-glucosamine 1-phosphate + acetyl-CoA = N-acetyl-alpha-D-glucosamine 1-phosphate + CoA + H(+). It catalyses the reaction N-acetyl-alpha-D-glucosamine 1-phosphate + UTP + H(+) = UDP-N-acetyl-alpha-D-glucosamine + diphosphate. It participates in nucleotide-sugar biosynthesis; UDP-N-acetyl-alpha-D-glucosamine biosynthesis; N-acetyl-alpha-D-glucosamine 1-phosphate from alpha-D-glucosamine 6-phosphate (route II): step 2/2. It functions in the pathway nucleotide-sugar biosynthesis; UDP-N-acetyl-alpha-D-glucosamine biosynthesis; UDP-N-acetyl-alpha-D-glucosamine from N-acetyl-alpha-D-glucosamine 1-phosphate: step 1/1. Its pathway is bacterial outer membrane biogenesis; LPS lipid A biosynthesis. In terms of biological role, catalyzes the last two sequential reactions in the de novo biosynthetic pathway for UDP-N-acetylglucosamine (UDP-GlcNAc). The C-terminal domain catalyzes the transfer of acetyl group from acetyl coenzyme A to glucosamine-1-phosphate (GlcN-1-P) to produce N-acetylglucosamine-1-phosphate (GlcNAc-1-P), which is converted into UDP-GlcNAc by the transfer of uridine 5-monophosphate (from uridine 5-triphosphate), a reaction catalyzed by the N-terminal domain. In Burkholderia orbicola (strain AU 1054), this protein is Bifunctional protein GlmU.